The chain runs to 419 residues: Acyl-coenzyme A thioesterase 1 (419 aa).

Residues S232, D324, and H358 each act as charge relay system in the active site. At S416 the chain carries Phosphoserine.

This sequence belongs to the C/M/P thioester hydrolase family. Monomer. As to expression, expressed in liver.

It localises to the cytoplasm. The protein localises to the cytosol. The catalysed reaction is hexadecanoyl-CoA + H2O = hexadecanoate + CoA + H(+). It carries out the reaction dodecanoyl-CoA + H2O = dodecanoate + CoA + H(+). It catalyses the reaction tetradecanoyl-CoA + H2O = tetradecanoate + CoA + H(+). The enzyme catalyses decanoyl-CoA + H2O = decanoate + CoA + H(+). The catalysed reaction is octadecanoyl-CoA + H2O = octadecanoate + CoA + H(+). It carries out the reaction eicosanoyl-CoA + H2O = eicosanoate + CoA + H(+). It catalyses the reaction (9Z)-octadecenoyl-CoA + H2O = (9Z)-octadecenoate + CoA + H(+). The enzyme catalyses (9Z)-hexadecenoyl-CoA + H2O = (9Z)-hexadecenoate + CoA + H(+). The catalysed reaction is (9E)-octadecenoyl-CoA + H2O = (9E)-octadecenoate + CoA + H(+). Its pathway is lipid metabolism; fatty acid metabolism. Its function is as follows. Catalyzes the hydrolysis of acyl-CoAs into free fatty acids and coenzyme A (CoASH), regulating their respective intracellular levels. More active towards saturated and unsaturated long chain fatty acyl-CoAs (C12-C20). This Rattus norvegicus (Rat) protein is Acyl-coenzyme A thioesterase 1 (Acot1).